A 141-amino-acid chain; its full sequence is Large ribosomal subunit protein uL11 (141 aa).

Belongs to the universal ribosomal protein uL11 family. Part of the ribosomal stalk of the 50S ribosomal subunit. Interacts with L10 and the large rRNA to form the base of the stalk. L10 forms an elongated spine to which L12 dimers bind in a sequential fashion forming a multimeric L10(L12)X complex. One or more lysine residues are methylated.

Forms part of the ribosomal stalk which helps the ribosome interact with GTP-bound translation factors. The chain is Large ribosomal subunit protein uL11 from Clostridium tetani (strain Massachusetts / E88).